The chain runs to 331 residues: Hyaluronidase A (331 aa).

2 disulfides stabilise this stretch: Cys-19–Cys-308 and Cys-185–Cys-197. N-linked (GlcNAc...) asparagine glycans are attached at residues Asn-79 and Asn-99. The active-site Proton donor is the Glu-109. Asn-127 is a glycosylation site (N-linked (GlcNAc...) asparagine). Asn-325 carries an N-linked (GlcNAc...) asparagine glycan.

Belongs to the glycosyl hydrolase 56 family. Expressed by the venom gland.

The protein resides in the secreted. The catalysed reaction is Random hydrolysis of (1-&gt;4)-linkages between N-acetyl-beta-D-glucosamine and D-glucuronate residues in hyaluronate.. In terms of biological role, hydrolyzes high molecular weight hyaluronic acid to produce small oligosaccharides. The chain is Hyaluronidase A from Vespula vulgaris (Yellow jacket).